The following is a 341-amino-acid chain: L-threonine 3-dehydrogenase (341 aa).

Cys-38 serves as a coordination point for Zn(2+). Catalysis depends on charge relay system residues Thr-40 and His-43. Zn(2+)-binding residues include His-63, Glu-64, Cys-93, Cys-96, Cys-99, and Cys-107. NAD(+)-binding positions include Ile-175, Asp-195, Arg-200, 262–264, and 286–287; these read LGI and IY.

Belongs to the zinc-containing alcohol dehydrogenase family. As to quaternary structure, homotetramer. Zn(2+) serves as cofactor.

Its subcellular location is the cytoplasm. The enzyme catalyses L-threonine + NAD(+) = (2S)-2-amino-3-oxobutanoate + NADH + H(+). Its pathway is amino-acid degradation; L-threonine degradation via oxydo-reductase pathway; glycine from L-threonine: step 1/2. In terms of biological role, catalyzes the NAD(+)-dependent oxidation of L-threonine to 2-amino-3-ketobutyrate. The chain is L-threonine 3-dehydrogenase from Escherichia coli O157:H7.